A 149-amino-acid chain; its full sequence is MHCPFCSAVDTKVIDSRLVGDGSQVRRRRQCLVCNERFTTFEVAELVMPRVVKSNGVREPFNEDKLRSGMLKALEKRPVNSDDVEMAISHIKSQLRATGEREVATKMVGNLVMDALKKLDKVAYIRFASVYRSFEDVREFGEEIARLQE.

The segment at 3–34 (CPFCSAVDTKVIDSRLVGDGSQVRRRRQCLVC) is a zinc-finger region. The region spanning 49–139 (PRVVKSNGVR…VYRSFEDVRE (91 aa)) is the ATP-cone domain.

It belongs to the NrdR family. The cofactor is Zn(2+).

Its function is as follows. Negatively regulates transcription of bacterial ribonucleotide reductase nrd genes and operons by binding to NrdR-boxes. The protein is Transcriptional repressor NrdR of Edwardsiella ictaluri (strain 93-146).